The sequence spans 387 residues: MATTKSFLILIVMILATTSSTFASLEEMVTVLSIDGGGIKGIIPGTILEFLEGQLQKMDNNADARLADYFDVIGGTSTGGLLTAMITTPNENNRPFAAANEIVPFYFEHGPHIFNSSTGQFFGPKYDGKYLMQVLQEKLGETRVHQALTEVAISSFDIKTNKPVIFTKSNLAKSPELDAKMYDICYSAAAAPTYFPPHYFATNTINGDKYEFNLVDGAVATVADPALLSVSVATRRAQEDPAFASIRSLNYKKMLLLSLGTGTTSEFDKTHTAEETAKWGALQWMLVIQQMTEAASSYMTDYYLSTVFQDLHSQNNYLRVQENALTGTTTKADDASEANMELLAQVGENLLKKPVSKDNPETYEEALKRFAKLLSDRKKLRANKASY.

A signal peptide spans 1–23 (MATTKSFLILIVMILATTSSTFA). The PNPLA domain occupies 32–230 (LSIDGGGIKG…TVADPALLSV (199 aa)). The GXGXXG motif lies at 36–41 (GGGIKG). A GXSXG motif is present at residues 75-79 (GTSTG). Residue Ser-77 is the Nucleophile of the active site. The N-linked (GlcNAc...) asparagine glycan is linked to Asn-115. Asp-216 (proton acceptor) is an active-site residue. A DGA/G motif is present at residues 216-218 (DGA). Residues 361–385 (ETYEEALKRFAKLLSDRKKLRANKA) adopt a coiled-coil conformation.

It belongs to the patatin family. As to expression, tuber and stolon.

It is found in the vacuole. In terms of biological role, probable lipolytic acyl hydrolase (LAH), an activity which is thought to be involved in the response of tubers to pathogens. The sequence is that of Patatin group A-2 from Solanum tuberosum (Potato).